Here is a 101-residue protein sequence, read N- to C-terminus: MEPVDPNLEPWKHPGSQPRTACNNCYCKKCCFHCYACFTRKGLGISYGRKKRRQRRRAPQDSQTHQASLSKQPASQSRGDPTGPTESKKKVERETETDPFD.

The interaction with human CREBBP stretch occupies residues Met1–Asn24. A transactivation region spans residues Met1–Gly48. Cys22, Cys25, and Cys27 together coordinate Zn(2+). The cysteine-rich stretch occupies residues Cys22–Cys37. Lys28 carries the post-translational modification N6-acetyllysine; by host PCAF. Zn(2+)-binding residues include Cys30, His33, Cys34, and Cys37. The tract at residues Phe38 to Gly48 is core. Over residues Gly48 to Arg57 the composition is skewed to basic residues. Residues Gly48–Asp101 form a disordered region. Positions Arg49–Arg57 match the Nuclear localization signal, RNA-binding (TAR), and protein transduction motif. The segment at Arg49 to Glu86 is interaction with the host capping enzyme RNGTT. Lys50 and Lys51 each carry N6-acetyllysine; by host EP300 and GCN5L2. Asymmetric dimethylarginine; by host PRMT6 is present on residues Arg52 and Arg53. Over residues Gln60–Gly79 the composition is skewed to polar residues. Residue Lys71 forms a Glycyl lysine isopeptide (Lys-Gly) (interchain with G-Cter in ubiquitin) linkage. The Cell attachment site signature appears at Arg78 to Asp80. Residues Glu86–Asp101 show a composition bias toward basic and acidic residues.

It belongs to the lentiviruses Tat family. In terms of assembly, interacts with host CCNT1. Associates with the P-TEFb complex composed at least of Tat, P-TEFb (CDK9 and CCNT1), TAR RNA, RNA Pol II. Recruits the HATs CREBBP, TAF1/TFIID, EP300, PCAF and GCN5L2. Interacts with host KAT5/Tip60; this interaction targets the latter to degradation. Interacts with the host deacetylase SIRT1. Interacts with host capping enzyme RNGTT; this interaction stimulates RNGTT. Binds to host KDR, and to the host integrins ITGAV/ITGB3 and ITGA5/ITGB1. Interacts with host KPNB1/importin beta-1 without previous binding to KPNA1/importin alpha-1. Interacts with EIF2AK2. Interacts with host nucleosome assembly protein NAP1L1; this interaction may be required for the transport of Tat within the nucleus, since the two proteins interact at the nuclear rim. Interacts with host C1QBP/SF2P32; this interaction involves lysine-acetylated Tat. Interacts with the host chemokine receptors CCR2, CCR3 and CXCR4. Interacts with host DPP4/CD26; this interaction may trigger an anti-proliferative effect. Interacts with host LDLR. Interacts with the host extracellular matrix metalloproteinase MMP1. Interacts with host PRMT6; this interaction mediates Tat's methylation. Interacts with, and is ubiquitinated by MDM2/Hdm2. Interacts with host PSMC3 and HTATIP2. Interacts with STAB1; this interaction may overcome SATB1-mediated repression of IL2 and IL2RA (interleukin) in T cells by binding to the same domain than HDAC1. Interacts (when acetylated) with human CDK13, thereby increasing HIV-1 mRNA splicing and promoting the production of the doubly spliced HIV-1 protein Nef. Interacts with host TBP; this interaction modulates the activity of transcriptional pre-initiation complex. Interacts with host RELA. Interacts with host PLSCR1; this interaction negatively regulates Tat transactivation activity by altering its subcellular distribution. Post-translationally, asymmetrical arginine methylation by host PRMT6 seems to diminish the transactivation capacity of Tat and affects the interaction with host CCNT1. Acetylation by EP300, CREBBP, GCN5L2/GCN5 and PCAF regulates the transactivation activity of Tat. EP300-mediated acetylation of Lys-50 promotes dissociation of Tat from the TAR RNA through the competitive binding to PCAF's bromodomain. In addition, the non-acetylated Tat's N-terminus can also interact with PCAF. PCAF-mediated acetylation of Lys-28 enhances Tat's binding to CCNT1. Lys-50 is deacetylated by SIRT1. In terms of processing, polyubiquitination by host MDM2 does not target Tat to degradation, but activates its transactivation function and fosters interaction with CCNT1 and TAR RNA. Post-translationally, phosphorylated by EIF2AK2 on serine and threonine residues adjacent to the basic region important for TAR RNA binding and function. Phosphorylation of Tat by EIF2AK2 is dependent on the prior activation of EIF2AK2 by dsRNA.

Its subcellular location is the host nucleus. It localises to the host nucleolus. It is found in the host cytoplasm. The protein resides in the secreted. Functionally, transcriptional activator that increases RNA Pol II processivity, thereby increasing the level of full-length viral transcripts. Recognizes a hairpin structure at the 5'-LTR of the nascent viral mRNAs referred to as the transactivation responsive RNA element (TAR) and recruits the cyclin T1-CDK9 complex (P-TEFb complex) that will in turn hyperphosphorylate the RNA polymerase II to allow efficient elongation. The CDK9 component of P-TEFb and other Tat-activated kinases hyperphosphorylate the C-terminus of RNA Pol II that becomes stabilized and much more processive. Other factors such as HTATSF1/Tat-SF1, SUPT5H/SPT5, and HTATIP2 are also important for Tat's function. Besides its effect on RNA Pol II processivity, Tat induces chromatin remodeling of proviral genes by recruiting the histone acetyltransferases (HATs) CREBBP, EP300 and PCAF to the chromatin. This also contributes to the increase in proviral transcription rate, especially when the provirus integrates in transcriptionally silent region of the host genome. To ensure maximal activation of the LTR, Tat mediates nuclear translocation of NF-kappa-B by interacting with host RELA. Through its interaction with host TBP, Tat may also modulate transcription initiation. Tat can reactivate a latently infected cell by penetrating in it and transactivating its LTR promoter. In the cytoplasm, Tat is thought to act as a translational activator of HIV-1 mRNAs. Its function is as follows. Extracellular circulating Tat can be endocytosed by surrounding uninfected cells via the binding to several surface receptors such as CD26, CXCR4, heparan sulfate proteoglycans (HSPG) or LDLR. Neurons are rarely infected, but they internalize Tat via their LDLR. Through its interaction with nuclear HATs, Tat is potentially able to control the acetylation-dependent cellular gene expression. Modulates the expression of many cellular genes involved in cell survival, proliferation or in coding for cytokines or cytokine receptors. Tat plays a role in T-cell and neurons apoptosis. Tat induced neurotoxicity and apoptosis probably contribute to neuroAIDS. Circulating Tat also acts as a chemokine-like and/or growth factor-like molecule that binds to specific receptors on the surface of the cells, affecting many cellular pathways. In the vascular system, Tat binds to ITGAV/ITGB3 and ITGA5/ITGB1 integrins dimers at the surface of endothelial cells and competes with bFGF for heparin-binding sites, leading to an excess of soluble bFGF. The polypeptide is Protein Tat (Homo sapiens (Human)).